The chain runs to 312 residues: Aspartate carbamoyltransferase catalytic subunit (312 aa).

Positions 58 and 59 each coordinate carbamoyl phosphate. K86 provides a ligand contact to L-aspartate. Carbamoyl phosphate-binding residues include R108, H136, and Q139. The L-aspartate site is built by R169 and R223. Positions 264 and 265 each coordinate carbamoyl phosphate.

The protein belongs to the aspartate/ornithine carbamoyltransferase superfamily. ATCase family. As to quaternary structure, heterododecamer (2C3:3R2) of six catalytic PyrB chains organized as two trimers (C3), and six regulatory PyrI chains organized as three dimers (R2).

The catalysed reaction is carbamoyl phosphate + L-aspartate = N-carbamoyl-L-aspartate + phosphate + H(+). The protein operates within pyrimidine metabolism; UMP biosynthesis via de novo pathway; (S)-dihydroorotate from bicarbonate: step 2/3. Functionally, catalyzes the condensation of carbamoyl phosphate and aspartate to form carbamoyl aspartate and inorganic phosphate, the committed step in the de novo pyrimidine nucleotide biosynthesis pathway. This is Aspartate carbamoyltransferase catalytic subunit from Acetivibrio thermocellus (strain ATCC 27405 / DSM 1237 / JCM 9322 / NBRC 103400 / NCIMB 10682 / NRRL B-4536 / VPI 7372) (Clostridium thermocellum).